The primary structure comprises 307 residues: DDRGK domain-containing protein 1 (307 aa).

Topologically, residues 1–2 (MD) are lumenal. Residues 3 to 23 (LILLVGIAVALLVILATLYFL) traverse the membrane as a helical segment. The Cytoplasmic portion of the chain corresponds to 24–307 (QNKNKAAGEA…PVQSAAGGDS (284 aa)). 2 stretches are compositionally biased toward low complexity: residues 32 to 43 (EAKPAAAAPRRG) and 54 to 83 (RRAQ…PAAA). A disordered region spans residues 32–162 (EAKPAAAAPR…EEVEAEAERK (131 aa)). Positions 117–162 (KMEAKEQKRLQREHELQEREKRKVKEAKEDAERKQQEEVEAEAERK) are enriched in basic and acidic residues.

It belongs to the DDRGK1 family. As to quaternary structure, interacts with Atg9; the interaction is transient.

It localises to the endoplasmic reticulum membrane. Its function is as follows. Substrate adapter for ufmylation, the covalent attachment of the ubiquitin-like modifier UFM1 to substrate proteins. Required for ufmylation of Atg9; protects the nervous system during aging, possibly by stabilizing Atg9 and supporting its function. This Drosophila willistoni (Fruit fly) protein is DDRGK domain-containing protein 1.